The chain runs to 274 residues: MLNTNKQAAASFQGVYFSYSELPLIRNLSFDVFEGEYVCIVGHNGSGKSTISKLLTGLLKPQAGTIKIFGKTISSENVTYLRNHIGIIFQNPDNQFIGITVEDDIAFGLENRRYTREKMKSIIEDVAQQAGITELLQKEPHNLSGGQKQRVAIASVLALNPAIIIFDESTSMLDPKAKRTIKQFMVELRNQGKCVISITHDMEEVTKADKVLVMNEGRLIRQGKPKDVFNSAAELQKIRLDIPFSLSLSTKVNGVTSTIDYQQLIEAIGKLWKK.

In terms of domain architecture, ABC transporter spans 10 to 241 (ASFQGVYFSY…AAELQKIRLD (232 aa)). 42–49 (GHNGSGKS) provides a ligand contact to ATP.

The protein belongs to the ABC transporter superfamily. Energy-coupling factor EcfA family. Forms a stable energy-coupling factor (ECF) transporter complex composed of 2 membrane-embedded substrate-binding proteins (S component), 2 ATP-binding proteins (A component) and 2 transmembrane proteins (T component).

It localises to the cell membrane. Functionally, ATP-binding (A) component of a common energy-coupling factor (ECF) ABC-transporter complex. Unlike classic ABC transporters this ECF transporter provides the energy necessary to transport a number of different substrates. This chain is Energy-coupling factor transporter ATP-binding protein EcfA1, found in Mycoplasma pneumoniae (strain ATCC 29342 / M129 / Subtype 1) (Mycoplasmoides pneumoniae).